A 217-amino-acid polypeptide reads, in one-letter code: MRNPSISITPEGLPAIGLCTLATLTFALIGCWVMAVIFLLLTWFCCHFFRDPERVTPTGAGLAVSPADGRVIRVEPVTDPITGEKRTCVCIFMNVFNVHVNRMPVAGTIRNIVYHPGKFFNAAWDKAATDNERCDYLIEDAEGGKWTMVQIAGLIARRIVCRVDEGDTLTRGERYGMIRFGSRVDLYLPDGYCPTVSVGEHVFAGQTIVARKSPEGA.

The active-site Schiff-base intermediate with substrate; via pyruvic acid is Ser-182. Ser-182 carries the post-translational modification Pyruvic acid (Ser); by autocatalysis.

Belongs to the phosphatidylserine decarboxylase family. PSD-A subfamily. In terms of assembly, heterodimer of a large membrane-associated beta subunit and a small pyruvoyl-containing alpha subunit. Requires pyruvate as cofactor. In terms of processing, is synthesized initially as an inactive proenzyme. Formation of the active enzyme involves a self-maturation process in which the active site pyruvoyl group is generated from an internal serine residue via an autocatalytic post-translational modification. Two non-identical subunits are generated from the proenzyme in this reaction, and the pyruvate is formed at the N-terminus of the alpha chain, which is derived from the carboxyl end of the proenzyme. The post-translation cleavage follows an unusual pathway, termed non-hydrolytic serinolysis, in which the side chain hydroxyl group of the serine supplies its oxygen atom to form the C-terminus of the beta chain, while the remainder of the serine residue undergoes an oxidative deamination to produce ammonia and the pyruvoyl prosthetic group on the alpha chain.

Its subcellular location is the cell membrane. It catalyses the reaction a 1,2-diacyl-sn-glycero-3-phospho-L-serine + H(+) = a 1,2-diacyl-sn-glycero-3-phosphoethanolamine + CO2. It participates in phospholipid metabolism; phosphatidylethanolamine biosynthesis; phosphatidylethanolamine from CDP-diacylglycerol: step 2/2. Catalyzes the formation of phosphatidylethanolamine (PtdEtn) from phosphatidylserine (PtdSer). The chain is Phosphatidylserine decarboxylase proenzyme from Nitratidesulfovibrio vulgaris (strain ATCC 29579 / DSM 644 / CCUG 34227 / NCIMB 8303 / VKM B-1760 / Hildenborough) (Desulfovibrio vulgaris).